Here is a 414-residue protein sequence, read N- to C-terminus: MFYINIAYIFMDLGMYGYITKTEKLNGMIKSNPEDFIVEEIPFDIKKDDNGKYLIIKARLYDWDTNRFVMYLARHMNISRKRITYAGTKDKRAVTTQYFCINTDRMFSGSINGIEIIEQFRSNDIIKLGDLYGNRFLIKVDYPGDLEKDSSETLKEINEKGGFPNFFGVQRFGSMRSNTHYIGKMIIKGEYEKAADKYLYDDNFDTEEYRINYGKNMDAKNSLKEYPGNLTFERSILGAIASGNKSSAFNALPKNLSIMFVHAFQSYLFNKMLSERMKHVKDLKTVIEGDLLYNIDDYFNPDKKRLIEANRYNLEMLNNLSSMDKIRPVIPLPGFDTRMPDGLQRDIMLKVLEDENVSLQDFKIPGEYSYMSSSGDYRIISAKPINLKFPEKNKLDFILGRGIYATSFLREIIK.

Catalysis depends on aspartate 90, which acts as the Nucleophile. The 221-residue stretch at 162-382 folds into the TRUD domain; the sequence is GFPNFFGVQR…SSGDYRIISA (221 aa).

This sequence belongs to the pseudouridine synthase TruD family.

The enzyme catalyses uridine(13) in tRNA = pseudouridine(13) in tRNA. In terms of biological role, could be responsible for synthesis of pseudouridine from uracil-13 in transfer RNAs. This Picrophilus torridus (strain ATCC 700027 / DSM 9790 / JCM 10055 / NBRC 100828 / KAW 2/3) protein is Probable tRNA pseudouridine synthase D.